The chain runs to 334 residues: Geranylgeranyl pyrophosphate synthase ltmG (334 aa).

Isopentenyl diphosphate contacts are provided by Lys53, Arg56, and His85. 2 residues coordinate Mg(2+): Asp92 and Asp96. Position 101 (Arg101) interacts with dimethylallyl diphosphate. Position 102 (Arg102) interacts with isopentenyl diphosphate. Positions 179, 180, and 213 each coordinate dimethylallyl diphosphate. Position 216 (Asp216) interacts with Mg(2+). Asn220, Lys230, and Lys240 together coordinate dimethylallyl diphosphate.

It belongs to the FPP/GGPP synthase family. It depends on Mg(2+) as a cofactor.

The enzyme catalyses isopentenyl diphosphate + dimethylallyl diphosphate = (2E)-geranyl diphosphate + diphosphate. It catalyses the reaction isopentenyl diphosphate + (2E)-geranyl diphosphate = (2E,6E)-farnesyl diphosphate + diphosphate. It carries out the reaction isopentenyl diphosphate + (2E,6E)-farnesyl diphosphate = (2E,6E,10E)-geranylgeranyl diphosphate + diphosphate. The protein operates within secondary metabolite biosynthesis. Its function is as follows. Geranylgeranyl pyrophosphate synthase; part of the gene cluster that mediates the biosynthesis of lolitrems, indole-diterpene mycotoxins that are potent tremorgens in mammals, and are synthesized by clavicipitaceous fungal endophytes in association with their grass hosts. The geranylgeranyl diphosphate (GGPP) synthase ltmG is proposed to catalyze the first step in lolitrem biosynthesis. LtmG catalyzes a series of iterative condensations of isopentenyl diphosphate (IPP) with dimethylallyl diphosphate (DMAPP), geranyl diphosphate (GPP), and farnesyl diphosphate (FPP), to form GGPP. GGPP then condenses with indole-3-glycerol phosphate to form 3-geranylgeranylindole, an acyclic intermediate, to be incorporated into paxilline. Either ltmG or ltmC could be responsible for this step, as both are putative prenyl transferases. The FAD-dependent monooxygenase ltmM then catalyzes the epoxidation of the two terminal alkenes of the geranylgeranyl moiety, which is subsequently cyclized by ltmB, to paspaline. The cytochrome P450 monooxygenases ltmQ and ltmP can sequentially oxidize paspaline to terpendole E and terpendole F. Alternatively, ltmP converts paspaline to an intermediate which is oxidized by ltmQ to terpendole F. LtmF, ltmK, ltmE and ltmJ appear to be unique to the epichloe endophytes. The prenyltransferase ltmF is involved in the 27-hydroxyl-O-prenylation. The cytochrome P450 monooxygenase ltmK is required for the oxidative acetal ring formation. The multi-functional prenyltransferase ltmE is required for C20- and C21-prenylations of the indole ring of paspalanes and acts together with the cytochrome P450 monooxygenase ltmJ to yield lolitremanes by multiple oxidations and ring closures. The stereoisomer pairs of lolitriol and lolitrem N or lolitrem B and lolitrem F may be attributed to variations in the way in which ring closure can occur under the action of ltmJ. While the major product of this pathway is lolitrem B, the prenyl transferases and cytochrome P450 monooxygenases identified in this pathway have a remarkable versatility in their regio- and stereo-specificities to generate a diverse range of metabolites that are products of a metabolic grid rather than a linear pathway. This is Geranylgeranyl pyrophosphate synthase ltmG from Epichloe festucae (strain Fl1).